A 320-amino-acid chain; its full sequence is Malate dehydrogenase (320 aa).

Residues 10 to 15 and Asp-34 each bind NAD(+); that span reads GAGQIG. The substrate site is built by Arg-83 and Arg-89. NAD(+)-binding positions include Asn-96 and 119 to 121; that span reads ITN. 2 residues coordinate substrate: Asn-121 and Arg-152. The active-site Proton acceptor is His-176.

Belongs to the LDH/MDH superfamily. MDH type 3 family.

It carries out the reaction (S)-malate + NAD(+) = oxaloacetate + NADH + H(+). Catalyzes the reversible oxidation of malate to oxaloacetate. The sequence is that of Malate dehydrogenase from Methylobacterium radiotolerans (strain ATCC 27329 / DSM 1819 / JCM 2831 / NBRC 15690 / NCIMB 10815 / 0-1).